The following is an 89-amino-acid chain: Small ribosomal subunit protein uS15 (89 aa).

It belongs to the universal ribosomal protein uS15 family. In terms of assembly, part of the 30S ribosomal subunit. Forms a bridge to the 50S subunit in the 70S ribosome, contacting the 23S rRNA.

Its function is as follows. One of the primary rRNA binding proteins, it binds directly to 16S rRNA where it helps nucleate assembly of the platform of the 30S subunit by binding and bridging several RNA helices of the 16S rRNA. Forms an intersubunit bridge (bridge B4) with the 23S rRNA of the 50S subunit in the ribosome. The chain is Small ribosomal subunit protein uS15 from Prosthecochloris aestuarii (strain DSM 271 / SK 413).